A 708-amino-acid chain; its full sequence is Exocyst complex component 8 (708 aa).

In terms of domain architecture, PH spans 168–268 (YLVYNGDLLE…WLEVLEETKR (101 aa)). A compositionally biased stretch (basic and acidic residues) spans 271-282 (ALSEKRRLEQEA). The segment at 271–314 (ALSEKRRLEQEALPRPAPTPPESTNPFEEEEEEEEEPSAEEEAV) is disordered. Residues 297-314 (FEEEEEEEEEPSAEEEAV) show a composition bias toward acidic residues.

The protein belongs to the EXO84 family. In terms of assembly, the exocyst complex is composed of EXOC1, EXOC2, EXOC3, EXOC4, EXOC5, EXOC6, EXOC7 and EXOC8.

It is found in the cytoplasm. It localises to the perinuclear region. Its subcellular location is the cell projection. The protein localises to the growth cone. Functionally, component of the exocyst complex involved in the docking of exocytic vesicles with fusion sites on the plasma membrane. The polypeptide is Exocyst complex component 8 (EXOC8) (Gallus gallus (Chicken)).